A 249-amino-acid polypeptide reads, in one-letter code: 4-hydroxy-tetrahydrodipicolinate reductase (249 aa).

NAD(+)-binding positions include D32, 74-76 (GTT), and 99-102 (SANY). H134 functions as the Proton donor/acceptor in the catalytic mechanism. H135 is a binding site for (S)-2,3,4,5-tetrahydrodipicolinate. K138 (proton donor) is an active-site residue. Position 144–145 (144–145 (GT)) interacts with (S)-2,3,4,5-tetrahydrodipicolinate.

The protein belongs to the DapB family.

Its subcellular location is the cytoplasm. It carries out the reaction (S)-2,3,4,5-tetrahydrodipicolinate + NAD(+) + H2O = (2S,4S)-4-hydroxy-2,3,4,5-tetrahydrodipicolinate + NADH + H(+). It catalyses the reaction (S)-2,3,4,5-tetrahydrodipicolinate + NADP(+) + H2O = (2S,4S)-4-hydroxy-2,3,4,5-tetrahydrodipicolinate + NADPH + H(+). Its pathway is amino-acid biosynthesis; L-lysine biosynthesis via DAP pathway; (S)-tetrahydrodipicolinate from L-aspartate: step 4/4. Its function is as follows. Catalyzes the conversion of 4-hydroxy-tetrahydrodipicolinate (HTPA) to tetrahydrodipicolinate. The polypeptide is 4-hydroxy-tetrahydrodipicolinate reductase (Chlorobaculum tepidum (strain ATCC 49652 / DSM 12025 / NBRC 103806 / TLS) (Chlorobium tepidum)).